Here is a 404-residue protein sequence, read N- to C-terminus: S-adenosylmethionine synthase (404 aa).

Residue H17 coordinates ATP. D19 provides a ligand contact to Mg(2+). E45 lines the K(+) pocket. 2 residues coordinate L-methionine: E58 and Q101. Positions 101–111 (QSPDINRGVDR) are flexible loop. Residues 172 to 174 (DAK), 245 to 246 (RF), D254, 260 to 261 (RK), A277, and K281 each bind ATP. D254 lines the L-methionine pocket. K285 is an L-methionine binding site.

The protein belongs to the AdoMet synthase family. Homotetramer; dimer of dimers. Mg(2+) serves as cofactor. It depends on K(+) as a cofactor.

Its subcellular location is the cytoplasm. The enzyme catalyses L-methionine + ATP + H2O = S-adenosyl-L-methionine + phosphate + diphosphate. It functions in the pathway amino-acid biosynthesis; S-adenosyl-L-methionine biosynthesis; S-adenosyl-L-methionine from L-methionine: step 1/1. In terms of biological role, catalyzes the formation of S-adenosylmethionine (AdoMet) from methionine and ATP. The overall synthetic reaction is composed of two sequential steps, AdoMet formation and the subsequent tripolyphosphate hydrolysis which occurs prior to release of AdoMet from the enzyme. The chain is S-adenosylmethionine synthase from Pelodictyon phaeoclathratiforme (strain DSM 5477 / BU-1).